We begin with the raw amino-acid sequence, 185 residues long: Coiled-coil domain-containing protein 32 (185 aa).

Residues 78–98 (LASLEKKLRRIKGLNQEVTSK) adopt a coiled-coil conformation. The segment at 159–185 (IPPESQVEKPVAEDEPAAGDKPAAAEQ) is disordered.

In terms of assembly, interacts with AP2S1; the interaction is direct and mediates association with adaptor protein complex 2 (AP-2).

It is found in the membrane. Its subcellular location is the coated pit. Regulates clathrin-mediated endocytsois of cargos such as transferrin probably through the association and modulation of adaptor protein complex 2 (AP-2). Has a role in ciliogenesis. Required for proper cephalic and left/right axis development. The sequence is that of Coiled-coil domain-containing protein 32 from Homo sapiens (Human).